Here is a 256-residue protein sequence, read N- to C-terminus: Small ribosomal subunit protein eS1 (256 aa).

Basic residues predominate over residues 1-18 (MAVGKNKRLSKGKKGIKK). The disordered stretch occupies residues 1 to 20 (MAVGKNKRLSKGKKGIKKRT). A2 is modified (N-acetylalanine; partial).

The protein belongs to the eukaryotic ribosomal protein eS1 family. Component of the small ribosomal subunit. Mature ribosomes consist of a small (40S) and a large (60S) subunit. The 40S subunit contains about 33 different proteins and 1 molecule of RNA (18S). The 60S subunit contains about 49 different proteins and 3 molecules of RNA (25S, 5.8S and 5S).

Its subcellular location is the cytoplasm. The chain is Small ribosomal subunit protein eS1 (rps1) from Emericella nidulans (strain FGSC A4 / ATCC 38163 / CBS 112.46 / NRRL 194 / M139) (Aspergillus nidulans).